The chain runs to 239 residues: 1-(5-phosphoribosyl)-5-[(5-phosphoribosylamino)methylideneamino] imidazole-4-carboxamide isomerase (239 aa).

D7 functions as the Proton acceptor in the catalytic mechanism. D129 serves as the catalytic Proton donor.

Belongs to the HisA/HisF family.

The protein localises to the cytoplasm. It catalyses the reaction 1-(5-phospho-beta-D-ribosyl)-5-[(5-phospho-beta-D-ribosylamino)methylideneamino]imidazole-4-carboxamide = 5-[(5-phospho-1-deoxy-D-ribulos-1-ylimino)methylamino]-1-(5-phospho-beta-D-ribosyl)imidazole-4-carboxamide. The protein operates within amino-acid biosynthesis; L-histidine biosynthesis; L-histidine from 5-phospho-alpha-D-ribose 1-diphosphate: step 4/9. This chain is 1-(5-phosphoribosyl)-5-[(5-phosphoribosylamino)methylideneamino] imidazole-4-carboxamide isomerase, found in Lactiplantibacillus plantarum (strain ATCC BAA-793 / NCIMB 8826 / WCFS1) (Lactobacillus plantarum).